A 111-amino-acid chain; its full sequence is UPF0122 protein CKR_1296 (111 aa).

The protein belongs to the UPF0122 family.

Functionally, might take part in the signal recognition particle (SRP) pathway. This is inferred from the conservation of its genetic proximity to ftsY/ffh. May be a regulatory protein. This chain is UPF0122 protein CKR_1296, found in Clostridium kluyveri (strain NBRC 12016).